A 408-amino-acid chain; its full sequence is MKKAAIITIGSELLEGLILNKNAQFLCQELKNLGYIVVKVSTVGDDLISISEEVKTLLLKVDLLILTGGLGPTQDDLTRDAVAKVLNRSLKLNEELLSKIKEKIKKYHSEIPQNIERQALVIDGAEVLDNPVGSAPGQLLTVDGKIVILLPGPPRELIPMFNALKDRLRTPDALYQVVLKYYSIPEAVLEDLLKDILYSQNIVEVATMADHVEGVRLRLTTHMKNKEYLDEMVKKILDKTGEHLYGVNDEKMEEVVVRLLKDRKKTLAVAESCTGGMLSSLVVNVPGASEVFIGGVVAYSNDLKKHILGVREDTLKKHGAVSEECVQEMTEGLKKLTGADICVSISGIAGPSGGTPEKPVGTVFIDIFEHEHITMRYNFTGDRNMIRTRSAMMALENLRKYLKGRERV.

Belongs to the CinA family.

This is CinA-like protein from Thermotoga sp. (strain RQ2).